A 227-amino-acid polypeptide reads, in one-letter code: Large ribosomal subunit protein uL3 (227 aa).

Glutamine 158 carries the N5-methylglutamine modification.

This sequence belongs to the universal ribosomal protein uL3 family. Part of the 50S ribosomal subunit. Forms a cluster with proteins L14 and L19. In terms of processing, methylated by PrmB.

One of the primary rRNA binding proteins, it binds directly near the 3'-end of the 23S rRNA, where it nucleates assembly of the 50S subunit. This is Large ribosomal subunit protein uL3 from Polaromonas sp. (strain JS666 / ATCC BAA-500).